A 186-amino-acid chain; its full sequence is Thioredoxin M2, chloroplastic (186 aa).

A chloroplast-targeting transit peptide spans 1–72; sequence MAAFTCTSRP…RVSRLRRAVV (72 aa). A Thioredoxin domain is found at 73-186; the sequence is CEAQETTTDI…LTSSLDKFLP (114 aa). Residues Cys110 and Cys113 each act as nucleophile in the active site. Cys110 and Cys113 are disulfide-bonded.

This sequence belongs to the thioredoxin family. Plant M-type subfamily. Interacts with G6PD1 and G6PD4. Interacts with PGL3.

It localises to the plastid. The protein resides in the chloroplast stroma. Thiol-disulfide oxidoreductase that may participate in various redox reactions. May activate NADP-malate dehydrogenase. The sequence is that of Thioredoxin M2, chloroplastic from Arabidopsis thaliana (Mouse-ear cress).